Consider the following 342-residue polypeptide: Protein RecA 1 (342 aa).

ATP is bound at residue 68 to 75; the sequence is GNESSGKT.

This sequence belongs to the RecA family.

It is found in the cytoplasm. In terms of biological role, can catalyze the hydrolysis of ATP in the presence of single-stranded DNA, the ATP-dependent uptake of single-stranded DNA by duplex DNA, and the ATP-dependent hybridization of homologous single-stranded DNAs. It interacts with LexA causing its activation and leading to its autocatalytic cleavage. The protein is Protein RecA 1 of Myxococcus xanthus.